The chain runs to 427 residues: Caspase recruitment domain-containing protein 8 (427 aa).

The segment at 1 to 23 is disordered; that stretch reads MGIPTSSVSEEQESSEGQDSGDI. The interval 51–186 is ZU5; sequence FLGPEGNVDV…FYAVLEKPSF (136 aa). Residues 51–336 enclose the FIIND domain; it reads FLGPEGNVDV…IQLGAASAPP (286 aa). The tract at residues 187–336 is UPA; sequence SLMGILLRIA…IQLGAASAPP (150 aa). In terms of domain architecture, CARD spans 336 to 426; it reads PAFSGAAFVK…YLVSYLRQQS (91 aa).

Interacts with DPP9; leading to inhibit activation of the inflammasome. DPP9 acts via formation of a ternary complex, composed of a DPP9 homodimer, one full-length CARD8 protein, and one cleaved C-terminus of CARD8 (Caspase recruitment domain-containing protein 8, C-terminus). Interacts with DPP8; leading to inhibit activation of the inflammasome, probably via formation of a ternary complex with DPP8. Interacts with NLRP3. Interacts with IKBKG/NEMO. Interacts with DRAL. Binds to caspase-1 (CASP1), CARD16/pseudo-ICE and CARD18/ICEBERG. Interacts with NLRP2 (via NACHT domain). As to quaternary structure, interacts with the C-terminal part of CARD8 (Caspase recruitment domain-containing protein 8, C-terminus) in absence of pathogens and other damage-associated signals. In terms of assembly, interacts with the N-terminal part of CARD8 (Caspase recruitment domain-containing protein 8, N-terminus) in absence of pathogens and other damage-associated signals. Homomultimer; forms the CARD8 inflammasome polymeric complex, a filament composed of homopolymers of this form in response to pathogens and other damage-associated signals. The CARD8 inflammasome polymeric complex directly recruits pro-caspase-1 (proCASP1) independently of PYCARD/ASC. Interacts (via CARD domain) with CASP1 (via CARD domain); leading to CASP1 activation. Undergoes autocatalytic processing within the FIIND domain to generate the N-terminal and C-terminal parts, which are associated non-covalently in absence of pathogens and other damage-associated signals. In terms of processing, ubiquitinated by the N-end rule pathway in response to pathogens and other damage-associated signals, leading to its degradation by the proteasome and subsequent release of the cleaved C-terminal part of the protein (Caspase recruitment domain-containing protein 8, C-terminus), which polymerizes and forms the CARD8 inflammasome.

The protein localises to the cytoplasm. It localises to the nucleus. The protein resides in the inflammasome. Its activity is regulated as follows. CARD8 inflammasome is inhibited by DPP8 and DPP9, which sequester the C-terminal fragment of CARD8 (Caspase recruitment domain-containing protein 8, C-terminus) in a ternary complex, thereby preventing CARD8 oligomerization and activation. CARD8 inflammasome is activated by Val-boroPro (Talabostat, PT-100), an inhibitor of dipeptidyl peptidases DPP8 and DPP9. Val-boroPro relieves inhibition of DPP8 and/or DPP9 by inducing the proteasome-mediated destruction of the N-terminal part of CARD8, releasing its C-terminal part from autoinhibition. Its function is as follows. Inflammasome sensor, which mediates inflammasome activation in response to various pathogen-associated signals, leading to subsequent pyroptosis of CD4(+) T-cells and macrophages. Inflammasomes are supramolecular complexes that assemble in the cytosol in response to pathogens and other damage-associated signals and play critical roles in innate immunity and inflammation. Acts as a recognition receptor (PRR): recognizes specific pathogens and other damage-associated signals, such as Val-boroPro inhibitor, and mediates CARD8 inflammasome activation. In response to pathogen-associated signals, the N-terminal part of CARD8 is degraded by the proteasome, releasing the cleaved C-terminal part of the protein (Caspase recruitment domain-containing protein 8, C-terminus), which polymerizes to initiate the formation of the inflammasome complex: the CARD8 inflammasome directly recruits pro-caspase-1 (proCASP1) independently of PYCARD/ASC and promotes caspase-1 (CASP1) activation, which subsequently cleaves and activates inflammatory cytokines IL1B and IL18 and gasdermin-D (GSDMD), leading to pyroptosis. Also acts as a negative regulator of the NLRP3 inflammasome. May also act as an inhibitor of NF-kappa-B activation. Functionally, constitutes the precursor of the CARD8 inflammasome, which mediates autoproteolytic processing within the FIIND domain to generate the N-terminal and C-terminal parts, which are associated non-covalently in absence of pathogens and other damage-associated signals. In terms of biological role, regulatory part that prevents formation of the CARD8 inflammasome: in absence of pathogens and other damage-associated signals, interacts with the C-terminal part of CARD8 (Caspase recruitment domain-containing protein 8, C-terminus), preventing activation of the CARD8 inflammasome. In response to pathogen-associated signals, this part is ubiquitinated by the N-end rule pathway and degraded by the proteasome, releasing the cleaved C-terminal part of the protein, which polymerizes and forms the CARD8 inflammasome. Constitutes the active part of the CARD8 inflammasome. In absence of pathogens and other damage-associated signals, interacts with the N-terminal part of CARD8 (Caspase recruitment domain-containing protein 8, N-terminus), preventing activation of the CARD8 inflammasome. In response to pathogen-associated signals, the N-terminal part of CARD8 is degraded by the proteasome, releasing this form, which polymerizes to form the CARD8 inflammasome complex: the CARD8 inflammasome complex then directly recruits pro-caspase-1 (proCASP1) and promotes caspase-1 (CASP1) activation, leading to gasdermin-D (GSDMD) cleavage and subsequent pyroptosis. The sequence is that of Caspase recruitment domain-containing protein 8 from Pongo abelii (Sumatran orangutan).